Reading from the N-terminus, the 140-residue chain is HTH-type transcriptional regulator AdhR (140 aa).

Positions 1–69 (MNIAQVAKQF…IEALIEYTTL (69 aa)) constitute an HTH merR-type domain. Residues 3 to 22 (IAQVAKQFGLTAATLRYYER) constitute a DNA-binding region (H-T-H motif). Residues 75-125 (RTVEARKNILADERQRLIEKRKEIDETIKRLDTKIKDYDGKLRENEAKLKS) are a coiled coil. Positions 120–140 (EAKLKSRPKTESLHGSVEQRR) are disordered.

In terms of biological role, transcriptional regulator involved in the response to aldehyde stress. Binds to the promoter region of the adhA-yraA operon, the yraC and its own promoter region; binding is unchanged in the presence of aldehydes. The polypeptide is HTH-type transcriptional regulator AdhR (adhR) (Bacillus subtilis (strain 168)).